A 485-amino-acid chain; its full sequence is UDP-N-acetylmuramate--L-alanine ligase (485 aa).

An ATP-binding site is contributed by 127-133; that stretch reads GTHGKTT.

It belongs to the MurCDEF family.

The protein resides in the cytoplasm. The catalysed reaction is UDP-N-acetyl-alpha-D-muramate + L-alanine + ATP = UDP-N-acetyl-alpha-D-muramoyl-L-alanine + ADP + phosphate + H(+). Its pathway is cell wall biogenesis; peptidoglycan biosynthesis. Its function is as follows. Cell wall formation. This Shewanella frigidimarina (strain NCIMB 400) protein is UDP-N-acetylmuramate--L-alanine ligase.